A 209-amino-acid polypeptide reads, in one-letter code: Chaperone protein TorD (209 aa).

The protein belongs to the TorD/DmsD family. TorD subfamily.

It localises to the cytoplasm. Involved in the biogenesis of TorA. Acts on TorA before the insertion of the molybdenum cofactor and, as a result, probably favors a conformation of the apoenzyme that is competent for acquiring the cofactor. The polypeptide is Chaperone protein TorD (Shewanella massilia).